An 852-amino-acid polypeptide reads, in one-letter code: Alanine--tRNA ligase (852 aa).

4 residues coordinate Zn(2+): histidine 554, histidine 558, cysteine 656, and histidine 660.

The protein belongs to the class-II aminoacyl-tRNA synthetase family. Zn(2+) is required as a cofactor.

The protein localises to the cytoplasm. The catalysed reaction is tRNA(Ala) + L-alanine + ATP = L-alanyl-tRNA(Ala) + AMP + diphosphate. Functionally, catalyzes the attachment of alanine to tRNA(Ala) in a two-step reaction: alanine is first activated by ATP to form Ala-AMP and then transferred to the acceptor end of tRNA(Ala). Also edits incorrectly charged Ser-tRNA(Ala) and Gly-tRNA(Ala) via its editing domain. In Campylobacter curvus (strain 525.92), this protein is Alanine--tRNA ligase.